The chain runs to 201 residues: Peptide deformylase 2 (201 aa).

The Fe cation site is built by cysteine 121 and histidine 163. The active site involves glutamate 164. Fe cation is bound at residue histidine 167.

Belongs to the polypeptide deformylase family. The cofactor is Fe(2+).

The catalysed reaction is N-terminal N-formyl-L-methionyl-[peptide] + H2O = N-terminal L-methionyl-[peptide] + formate. Removes the formyl group from the N-terminal Met of newly synthesized proteins. Requires at least a dipeptide for an efficient rate of reaction. N-terminal L-methionine is a prerequisite for activity but the enzyme has broad specificity at other positions. This chain is Peptide deformylase 2, found in Prochlorococcus marinus (strain MIT 9313).